The sequence spans 313 residues: MSEVSYDILENPEPNSHLWKQWKNLVDTEGWTSDDNSVTALTPSMPSTRSVWAVSKTAENDFVGCVIWNEYNKICFLGFFLLAPEYRGKGVGSVIWDIAMSRMPADHTLGLRGVPSMVDKYRKKATPFVGATLENYKMKVAEYHASMEKMTGDNFKLVSHLTPVEFDQLVRYDSDVNGRNRREFLELYYKLDCVLGVVLFDQHHKIIAHISAVRTSHKEDNVFKIAPLYADSPSIAMSALRVFSGVMFELHPEADVLFHLLDVGSGAFLQSFFQSLEIIPAVSGVTLFSNEWPNKGDLSKVFIAHNNSCHFDY.

In terms of domain architecture, N-acetyltransferase spans Y6–G152.

To the C-terminal of C.elegans F21C10.9. This is an uncharacterized protein from Caenorhabditis elegans.